A 486-amino-acid polypeptide reads, in one-letter code: MTTSMQPSKYTGLVADLMPNIRAMKYSGLFMHNFTGGSAFMKKVYSSVHLVFLLMQFTFILVNMALNAEEVNELSGNTITTLFFTHCITKFIYLAVNQKNFYRTLNIWNQVNTHPLFAESDARYHSIALAKMRKLFFLVMLTTVASATAWTTITFFGDSVKMVVDHETNSSIPVEIPRLPIKSFYPWNASHGMFYMISFAFQIYYVLFSMIHSNLCDVMFCSWLIFACEQLQHLKGIMKPLMELSASLDTYRPNSAALFRSLSANSKSELIHNEEKDPGTDMDMSGIYSSKADWGAQFRAPSTLQSFGGNGGGGNGLVNGANPNGLTKKQEMMVRSAIKYWVERHKHVVRLVAAIGDTYGAALLLHMLTSTIKLTLLAYQATKINGVNVYAFTVVGYLGYALAQVFHFCIFGNRLIEESSSVMEAAYSCHWYDGSEEAKTFVQIVCQQCQKAMSISGAKFFTVSLDLFASVLGAVVTYFMVLVQLK.

The Cytoplasmic portion of the chain corresponds to 1–47 (MTTSMQPSKYTGLVADLMPNIRAMKYSGLFMHNFTGGSAFMKKVYSS). A helical membrane pass occupies residues 48–68 (VHLVFLLMQFTFILVNMALNA). The Extracellular portion of the chain corresponds to 69–75 (EEVNELS). The chain crosses the membrane as a helical span at residues 76 to 96 (GNTITTLFFTHCITKFIYLAV). At 97-135 (NQKNFYRTLNIWNQVNTHPLFAESDARYHSIALAKMRKL) the chain is on the cytoplasmic side. A helical transmembrane segment spans residues 136–156 (FFLVMLTTVASATAWTTITFF). At 157–191 (GDSVKMVVDHETNSSIPVEIPRLPIKSFYPWNASH) the chain is on the extracellular side. Residues N169 and N188 are each glycosylated (N-linked (GlcNAc...) asparagine). Residues 192–212 (GMFYMISFAFQIYYVLFSMIH) traverse the membrane as a helical segment. Residues 213-351 (SNLCDVMFCS…VERHKHVVRL (139 aa)) are Cytoplasmic-facing. Residues 352 to 372 (VAAIGDTYGAALLLHMLTSTI) form a helical membrane-spanning segment. The Extracellular segment spans residues 373–390 (KLTLLAYQATKINGVNVY). The helical transmembrane segment at 391-411 (AFTVVGYLGYALAQVFHFCIF) threads the bilayer. The Cytoplasmic portion of the chain corresponds to 412-462 (GNRLIEESSSVMEAAYSCHWYDGSEEAKTFVQIVCQQCQKAMSISGAKFFT). Residues 463-483 (VSLDLFASVLGAVVTYFMVLV) form a helical membrane-spanning segment. Residues 484–486 (QLK) are Extracellular-facing.

The protein belongs to the insect chemoreceptor superfamily. Heteromeric odorant receptor channel (TC 1.A.69) family. Orco subfamily. As to quaternary structure, heterodimer with conventional odorant receptors (ORs). Complexes exist early in the endomembrane system in olfactory sensory neurons (OSNs), coupling these complexes to the conserved ciliary trafficking pathway. Expression is restricted to olfactory sensory neurons (OSNs). Coexpressed with Snmp in a lateral-distal population of OSNs. Expressed in the embryonic antennal-maxillary complex, in all 21 OSNs of the larval dorsal organ, in the pupal antennal OSNs, in all 120 adult maxillary palp neurons and in approximately 70-80% of adult antennal OSNs, where expression is highest at the dorsal-medial edge. Localized to OSN cell bodies and to the distal portion of ciliated OSN dendrites.

It localises to the cell membrane. Functionally, odorant coreceptor which complexes with conventional odorant receptors (ORs) to form odorant-sensing units, providing sensitive and prolonged odorant signaling and calcium permeability. Orco is a universal and integral part of the functional odorant receptor, involved in the dendritic localization of other olfactory receptors. Expression of Orco alone leads to formation of rapid and transient ion channels not directly responding to odorants, but directly activated by intracellular cAMP or cGMP. Snmp, Or67d and lush act in concert to capture fatty-acid-derived male pheromone 11-cis vaccenyl acetate (cVA) molecules on the surface of Or67d expressing olfactory dendrites and facilitate their transfer to the odorant-receptor Orco complex. This Drosophila melanogaster (Fruit fly) protein is Odorant receptor coreceptor (Orco).